The primary structure comprises 234 residues: ATP-dependent dethiobiotin synthetase BioD (234 aa).

12–17 (DVGKTF) contacts ATP. Residue threonine 16 participates in Mg(2+) binding. Lysine 37 is a catalytic residue. Serine 41 serves as a coordination point for substrate. Residues aspartate 52, 118–121 (EGAG), and 178–179 (SQ) each bind ATP. Mg(2+) is bound by residues aspartate 52 and glutamate 118.

The protein belongs to the dethiobiotin synthetase family. Homodimer. Mg(2+) serves as cofactor.

The protein localises to the cytoplasm. The catalysed reaction is (7R,8S)-7,8-diammoniononanoate + CO2 + ATP = (4R,5S)-dethiobiotin + ADP + phosphate + 3 H(+). It participates in cofactor biosynthesis; biotin biosynthesis; biotin from 7,8-diaminononanoate: step 1/2. Functionally, catalyzes a mechanistically unusual reaction, the ATP-dependent insertion of CO2 between the N7 and N8 nitrogen atoms of 7,8-diaminopelargonic acid (DAPA, also called 7,8-diammoniononanoate) to form a ureido ring. This is ATP-dependent dethiobiotin synthetase BioD from Phenylobacterium zucineum (strain HLK1).